Consider the following 165-residue polypeptide: S-ribosylhomocysteine lyase (165 aa).

His-54, His-58, and Cys-128 together coordinate Fe cation.

It belongs to the LuxS family. As to quaternary structure, homodimer. Requires Fe cation as cofactor.

The enzyme catalyses S-(5-deoxy-D-ribos-5-yl)-L-homocysteine = (S)-4,5-dihydroxypentane-2,3-dione + L-homocysteine. Its function is as follows. Involved in the synthesis of autoinducer 2 (AI-2) which is secreted by bacteria and is used to communicate both the cell density and the metabolic potential of the environment. The regulation of gene expression in response to changes in cell density is called quorum sensing. Catalyzes the transformation of S-ribosylhomocysteine (RHC) to homocysteine (HC) and 4,5-dihydroxy-2,3-pentadione (DPD). This is S-ribosylhomocysteine lyase from Helicobacter hepaticus (strain ATCC 51449 / 3B1).